A 442-amino-acid chain; its full sequence is D-serine dehydratase (442 aa).

Position 118 is an N6-(pyridoxal phosphate)lysine (lysine 118).

This sequence belongs to the serine/threonine dehydratase family. DsdA subfamily. As to quaternary structure, monomer. Pyridoxal 5'-phosphate serves as cofactor.

It catalyses the reaction D-serine = pyruvate + NH4(+). The chain is D-serine dehydratase from Escherichia coli O6:H1 (strain CFT073 / ATCC 700928 / UPEC).